Consider the following 179-residue polypeptide: PP2C-like domain-containing protein R307 (179 aa).

Residues 1–176 form the PPM-type phosphatase domain; it reads MNESKRENIQ…DNVSVIIIFF (176 aa).

Its subcellular location is the virion. The chain is PP2C-like domain-containing protein R307 from Acanthamoeba polyphaga mimivirus (APMV).